A 466-amino-acid polypeptide reads, in one-letter code: GTPase Der (466 aa).

EngA-type G domains lie at 3–167 (PTLV…PDEP) and 176–350 (PKIA…GAAM). GTP is bound by residues 9–16 (GRSNVGKS), 56–60 (DTGGF), 119–122 (NKTE), 182–189 (GRPNVGKS), 229–233 (DTAGL), and 294–297 (NKWD). A KH-like domain is found at 351-435 (AHLPTPRLTR…PLRIEFRTGR (85 aa)). Residues 433–466 (TGRNPYAGKSPAPLTEAEAKRAHRRRRYGRKKYG) are disordered. Positions 453 to 466 (RAHRRRRYGRKKYG) are enriched in basic residues.

This sequence belongs to the TRAFAC class TrmE-Era-EngA-EngB-Septin-like GTPase superfamily. EngA (Der) GTPase family. As to quaternary structure, associates with the 50S ribosomal subunit.

Its function is as follows. GTPase that plays an essential role in the late steps of ribosome biogenesis. This Nitrosospira multiformis (strain ATCC 25196 / NCIMB 11849 / C 71) protein is GTPase Der.